Reading from the N-terminus, the 312-residue chain is Olfactory receptor 6C70 (312 aa).

The Extracellular portion of the chain corresponds to Met1–Gln22. Asn3 is a glycosylation site (N-linked (GlcNAc...) asparagine). Residues Ile23–Ile43 traverse the membrane as a helical segment. Residues Ile44–Asn63 are Cytoplasmic-facing. The helical transmembrane segment at Phe64–Val84 threads the bilayer. Over Thr85 to Cys95 the chain is Extracellular. An intrachain disulfide couples Cys95 to Cys177. Residues Ile96–Leu116 form a helical membrane-spanning segment. Residues Ser117–Gln141 lie on the Cytoplasmic side of the membrane. Residues Leu142 to Leu162 form a helical membrane-spanning segment. Residues Asn163–Glu194 are Extracellular-facing. The chain crosses the membrane as a helical span at residues Leu195–Ser215. At Tyr216–Ser237 the chain is on the cytoplasmic side. Residues Thr238–Ile258 traverse the membrane as a helical segment. Residues Lys259–Val272 are Extracellular-facing. Residues Thr273–Leu290 traverse the membrane as a helical segment. Residues Arg291 to Lys312 are Cytoplasmic-facing.

This sequence belongs to the G-protein coupled receptor 1 family.

The protein resides in the cell membrane. In terms of biological role, odorant receptor. In Homo sapiens (Human), this protein is Olfactory receptor 6C70 (OR6C70).